A 249-amino-acid chain; its full sequence is Pyridoxine 5'-phosphate synthase (249 aa).

Residue N10 participates in 3-amino-2-oxopropyl phosphate binding. 12–13 (DH) serves as a coordination point for 1-deoxy-D-xylulose 5-phosphate. Residue R21 coordinates 3-amino-2-oxopropyl phosphate. The Proton acceptor role is filled by H46. The 1-deoxy-D-xylulose 5-phosphate site is built by R48 and H53. E73 functions as the Proton acceptor in the catalytic mechanism. T103 contributes to the 1-deoxy-D-xylulose 5-phosphate binding site. H194 acts as the Proton donor in catalysis. 3-amino-2-oxopropyl phosphate-binding positions include G195 and 216–217 (GH).

It belongs to the PNP synthase family. In terms of assembly, homooctamer; tetramer of dimers.

The protein localises to the cytoplasm. The catalysed reaction is 3-amino-2-oxopropyl phosphate + 1-deoxy-D-xylulose 5-phosphate = pyridoxine 5'-phosphate + phosphate + 2 H2O + H(+). The protein operates within cofactor biosynthesis; pyridoxine 5'-phosphate biosynthesis; pyridoxine 5'-phosphate from D-erythrose 4-phosphate: step 5/5. Its function is as follows. Catalyzes the complicated ring closure reaction between the two acyclic compounds 1-deoxy-D-xylulose-5-phosphate (DXP) and 3-amino-2-oxopropyl phosphate (1-amino-acetone-3-phosphate or AAP) to form pyridoxine 5'-phosphate (PNP) and inorganic phosphate. The sequence is that of Pyridoxine 5'-phosphate synthase from Rhodospirillum rubrum (strain ATCC 11170 / ATH 1.1.1 / DSM 467 / LMG 4362 / NCIMB 8255 / S1).